We begin with the raw amino-acid sequence, 545 residues long: CTP synthase (545 aa).

The tract at residues 1 to 266 (MTKNYIFITG…DDYICNYFKL (266 aa)) is amidoligase domain. Ser-14 serves as a coordination point for CTP. Ser-14 lines the UTP pocket. Residues 15–20 (SLGKGI) and Asp-72 contribute to the ATP site. Mg(2+)-binding residues include Asp-72 and Glu-140. CTP is bound by residues 147–149 (DIE), 187–192 (KTKPTQ), and Lys-223. Residues 187–192 (KTKPTQ) and Lys-223 contribute to the UTP site. 239-241 (KDV) contacts ATP. Residues 291–543 (VIGIIGKYIK…IKSAGKHKKN (253 aa)) enclose the Glutamine amidotransferase type-1 domain. Residue Gly-352 coordinates L-glutamine. Residue Cys-379 is the Nucleophile; for glutamine hydrolysis of the active site. L-glutamine-binding positions include 380-383 (LGMQ), Glu-403, and Arg-471. Residues His-516 and Glu-518 contribute to the active site.

Belongs to the CTP synthase family. In terms of assembly, homotetramer.

The catalysed reaction is UTP + L-glutamine + ATP + H2O = CTP + L-glutamate + ADP + phosphate + 2 H(+). It catalyses the reaction L-glutamine + H2O = L-glutamate + NH4(+). It carries out the reaction UTP + NH4(+) + ATP = CTP + ADP + phosphate + 2 H(+). Its pathway is pyrimidine metabolism; CTP biosynthesis via de novo pathway; CTP from UDP: step 2/2. Allosterically activated by GTP, when glutamine is the substrate; GTP has no effect on the reaction when ammonia is the substrate. The allosteric effector GTP functions by stabilizing the protein conformation that binds the tetrahedral intermediate(s) formed during glutamine hydrolysis. Inhibited by the product CTP, via allosteric rather than competitive inhibition. In terms of biological role, catalyzes the ATP-dependent amination of UTP to CTP with either L-glutamine or ammonia as the source of nitrogen. Regulates intracellular CTP levels through interactions with the four ribonucleotide triphosphates. This chain is CTP synthase, found in Buchnera aphidicola subsp. Acyrthosiphon pisum (strain Tuc7).